Consider the following 132-residue polypeptide: Ubiquinol-cytochrome c reductase complex assembly factor 4 (132 aa).

Positions 1–15 are cleaved as a signal peptide; that stretch reads MNRVLCAPAAGAVRA. At 16 to 78 the chain is on the mitochondrial matrix side; that stretch reads LRLIGWASRS…GKGHQRPWWK (63 aa). Residues 29 to 72 are disordered; it reads LPGSRDRAHPAAEEEDDPDRPIEFSSSKANPHRWSVGHTMGKGH. A helical membrane pass occupies residues 79-95; sequence VLPLSCFLVALIIWCYL. The Mitochondrial intermembrane segment spans residues 96-132; it reads REESEADQWLRQVWGEVPEPSDRSEEPETPAAYRART. The tract at residues 110 to 132 is disordered; that stretch reads GEVPEPSDRSEEPETPAAYRART.

This sequence belongs to the UQCC4 family. Forms a complex, named COMB/coordinator of mitochondrial CYTB biogenesis, composed of UQCC1, UQCC2, UQCC4, UQCC5 and UQCC6; stabilizes nascent cytochrome b/MT-CYB and promotes its membrane insertion. Forms a complex, named COMA, composed of UQCC1, UQCC2 and UQCC4; activates MT-CYB translation. Forms a complex, named COMC, composed of UQCC1, UQCC2; UQCC3 and UQCC4; mediates MT-CYB hemylation and association with the first nuclear-encoded complex III subunit UQCRQ. Complexes COMA and COMB are bound to the mitochondrion inner membrane by UQCC4.

The protein resides in the mitochondrion inner membrane. In terms of biological role, required for the assembly and stability of the mitochondrial ubiquinol-cytochrome c reductase complex (complex III (CIII) or cytochrome b-c1 complex), a multisubunit transmembrane complex that is part of the mitochondrial electron transport chain (ETC) which drives oxidative phosphorylation. The sequence is that of Ubiquinol-cytochrome c reductase complex assembly factor 4 from Homo sapiens (Human).